The primary structure comprises 24 residues: KLGEFSPTRTYRGHNKKDKKMQKK.

The tract at residues 1 to 24 is disordered; it reads KLGEFSPTRTYRGHNKKDKKMQKK. A compositionally biased stretch (basic residues) spans 11–24; it reads YRGHNKKDKKMQKK.

The protein belongs to the universal ribosomal protein uS19 family.

In terms of biological role, protein S19 forms a complex with S13 that binds strongly to the 16S ribosomal RNA. In Phytoplasma sp. (strain STRAWB2), this protein is Small ribosomal subunit protein uS19.